Here is a 490-residue protein sequence, read N- to C-terminus: Glutamate--tRNA ligase (490 aa).

The 'HIGH' region signature appears at 9 to 19 (PSPTGLQHIGG). Positions 251–255 (KLSKR) match the 'KMSKS' region motif. Residue Lys-254 coordinates ATP.

The protein belongs to the class-I aminoacyl-tRNA synthetase family. Glutamate--tRNA ligase type 1 subfamily. Monomer.

The protein localises to the cytoplasm. It carries out the reaction tRNA(Glu) + L-glutamate + ATP = L-glutamyl-tRNA(Glu) + AMP + diphosphate. Its function is as follows. Catalyzes the attachment of glutamate to tRNA(Glu) in a two-step reaction: glutamate is first activated by ATP to form Glu-AMP and then transferred to the acceptor end of tRNA(Glu). In Borreliella afzelii (strain PKo) (Borrelia afzelii), this protein is Glutamate--tRNA ligase.